The following is a 370-amino-acid chain: Cysteine-type anaerobic sulfatase-maturating enzyme (370 aa).

The Radical SAM core domain maps to 1–227; that stretch reads MPPLSLLIKP…LKNLFDFWYE (227 aa). The [4Fe-4S] cluster site is built by C15 and C19. Residue Y21 participates in S-adenosyl-L-methionine binding. C22 contacts [4Fe-4S] cluster. Residues G66, S122, R134, and L195 each coordinate S-adenosyl-L-methionine. [4Fe-4S] cluster is bound by residues C255, C261, and C276. D277 serves as the catalytic Proton acceptor. 5 residues coordinate [4Fe-4S] cluster: C317, C320, C326, C330, and C348.

This sequence belongs to the radical SAM superfamily. Anaerobic sulfatase-maturating enzyme family. In terms of assembly, monomer. [4Fe-4S] cluster is required as a cofactor.

It carries out the reaction L-cysteinyl-[sulfatase] + S-adenosyl-L-methionine + H2O = 3-oxo-L-alanyl-[sulfatase] + hydrogen sulfide + 5'-deoxyadenosine + L-methionine + 2 H(+). The protein operates within protein modification; sulfatase oxidation. Involved in 'Cys-type' sulfatase maturation under anaerobic conditions. Catalyzes the post-translational modification of cysteine ('Cys-51' in the arylsulfatase CPF_0221) into 3-oxoalanine (also known as C(alpha)-formylglycine (FGly)), by a free radical chemical mechanism initiated via the reductive cleavage of S-adenosyl-L-methionine (SAM). Is also able to oxidize a serine residue in a synthetic substrate to FGly in vitro, and in a serine variant of a Cys-type sulfatase in vivo, but this activity is not physiological. Converts threonyl peptides to the corresponding ketone product, and also allo-threonyl peptides, but with a significantly reduced efficiency. The chain is Cysteine-type anaerobic sulfatase-maturating enzyme from Clostridium perfringens (strain ATCC 13124 / DSM 756 / JCM 1290 / NCIMB 6125 / NCTC 8237 / Type A).